Here is a 98-residue protein sequence, read N- to C-terminus: 10 kDa chaperonin, mitochondrial (98 aa).

Residues 1–17 (MMKRLIPTFNRILVQRV) constitute a mitochondrion transit peptide. Residues 18 to 94 (IQPAKTESGI…LFRDEDVLGT (77 aa)) form a cpn-10 domain region.

This sequence belongs to the GroES chaperonin family. In terms of assembly, forms stable complexes with CPN60 in the presence of ATP.

Its subcellular location is the mitochondrion. In terms of biological role, seems to function only as a co-chaperone, along with CPN60, and in certain cases is essential for the discharge of biologically active proteins from CPN60. The chain is 10 kDa chaperonin, mitochondrial (CPN10) from Arabidopsis thaliana (Mouse-ear cress).